Here is a 105-residue protein sequence, read N- to C-terminus: Nitrogen fixation nifHD region glnB-like protein 1 (105 aa).

Belongs to the P(II) protein family.

In terms of biological role, could be involved in the regulation of nitrogen fixation. This Methanococcus maripaludis (strain DSM 14266 / JCM 13030 / NBRC 101832 / S2 / LL) protein is Nitrogen fixation nifHD region glnB-like protein 1 (glnBI).